We begin with the raw amino-acid sequence, 188 residues long: dCTP deaminase (188 aa).

DCTP-binding positions include Lys111–Arg116, Thr135–Glu137, Gln156, Tyr170, and Gln180. The active-site Proton donor/acceptor is Glu137.

The protein belongs to the dCTP deaminase family. Homotrimer.

The catalysed reaction is dCTP + H2O + H(+) = dUTP + NH4(+). It functions in the pathway pyrimidine metabolism; dUMP biosynthesis; dUMP from dCTP (dUTP route): step 1/2. Functionally, catalyzes the deamination of dCTP to dUTP. This is dCTP deaminase from Janthinobacterium sp. (strain Marseille) (Minibacterium massiliensis).